The chain runs to 349 residues: Core protein VP7 (349 aa).

Asn287 carries N-linked (GlcNAc...) asparagine; by host glycosylation.

The protein belongs to the orbivirus VP7 family. As to quaternary structure, homotrimer that assemble in a complex of 260 capsomers on an inner scaffold composed of VP3.

It is found in the virion. The VP7 protein is one of the five proteins (with VP1, VP3, VP4, and VP6) which form the inner capsid of the virus. This Antilocapra americana (Pronghorn) protein is Core protein VP7 (Segment-7).